We begin with the raw amino-acid sequence, 214 residues long: NKG2-D type II integral membrane protein (214 aa).

Residues 1-56 (MGWIRDRRSPSSMEIRELHNRDVINRGAFKSRQKRTQTLITSKCGENPSPFFLARS) are Cytoplasmic-facing. The helical; Signal-anchor for type II membrane protein transmembrane segment at 57-77 (IAIAMGIRFIVMVMIYSGMII) threads the bilayer. Topologically, residues 78–214 (NLLFNQEAPS…NTYICMKRTV (137 aa)) are extracellular. Disulfide bonds link Cys-94-Cys-103 and Cys-97-Cys-108. The C-type lectin domain maps to 98-210 (PKNWICYRNS…CLTLNTYICM (113 aa)). Asn-113, Asn-129, Asn-161, and Asn-184 each carry an N-linked (GlcNAc...) asparagine glycan. 2 cysteine pairs are disulfide-bonded: Cys-125/Cys-209 and Cys-187/Cys-201.

In terms of assembly, homodimer; disulfide-linked. Heterohexamer composed of two subunits of KLRK1 and four subunits of HCST/DAP10. Interacts (via transmembrane domain) with HCST/DAP10 (via transmembrane domain); the interaction is required for KLRK1 NK cell surface and induces NK cell-mediated cytotoxicity. Can form disulfide-bonded heterodimer with CD94. Interacts with CEACAM1; recruits PTPN6 that dephosphorylates VAV1. As to expression, detected in peripheral blood leukocytes, macrophages, monocytes and natural killer cells.

Its subcellular location is the cell membrane. Functionally, functions as an activating and costimulatory receptor involved in immunosurveillance upon binding to various cellular stress-inducible ligands displayed at the surface of autologous tumor cells and virus-infected cells. Provides both stimulatory and costimulatory innate immune responses on activated killer (NK) cells, leading to cytotoxic activity. Acts as a costimulatory receptor for T-cell receptor (TCR) in CD8(+) T-cell-mediated adaptive immune responses by amplifying T-cell activation. Stimulates perforin-mediated elimination of ligand-expressing tumor cells. Signaling involves calcium influx, culminating in the expression of TNF-alpha. Participates in NK cell-mediated bone marrow graft rejection. May play a regulatory role in differentiation and survival of NK cells. Binds to ligands belonging to various subfamilies of MHC class I-related glycoproteins. The chain is NKG2-D type II integral membrane protein (KLRK1) from Sus scrofa (Pig).